We begin with the raw amino-acid sequence, 543 residues long: CTP synthase (543 aa).

An amidoligase domain region spans residues 1-266; that stretch reads MTKFIFVTGG…DDIICERFGI (266 aa). Residue serine 13 participates in CTP binding. Residue serine 13 coordinates UTP. ATP-binding positions include 14-19 and aspartate 71; that span reads SLGKGI. Positions 71 and 140 each coordinate Mg(2+). Residues 147-149, 187-192, and lysine 223 each bind CTP; these read DIE and KTKPTQ. UTP is bound by residues 187–192 and lysine 223; that span reads KTKPTQ. The Glutamine amidotransferase type-1 domain maps to 291–543; sequence TVAIVGKYVE…VKAAIDHQNI (253 aa). Glycine 354 is a binding site for L-glutamine. Residue cysteine 381 is the Nucleophile; for glutamine hydrolysis of the active site. L-glutamine is bound by residues 382–385, glutamate 404, and arginine 471; that span reads LGMQ. Active-site residues include histidine 516 and glutamate 518.

The protein belongs to the CTP synthase family. In terms of assembly, homotetramer.

The enzyme catalyses UTP + L-glutamine + ATP + H2O = CTP + L-glutamate + ADP + phosphate + 2 H(+). It carries out the reaction L-glutamine + H2O = L-glutamate + NH4(+). It catalyses the reaction UTP + NH4(+) + ATP = CTP + ADP + phosphate + 2 H(+). Its pathway is pyrimidine metabolism; CTP biosynthesis via de novo pathway; CTP from UDP: step 2/2. Its activity is regulated as follows. Allosterically activated by GTP, when glutamine is the substrate; GTP has no effect on the reaction when ammonia is the substrate. The allosteric effector GTP functions by stabilizing the protein conformation that binds the tetrahedral intermediate(s) formed during glutamine hydrolysis. Inhibited by the product CTP, via allosteric rather than competitive inhibition. In terms of biological role, catalyzes the ATP-dependent amination of UTP to CTP with either L-glutamine or ammonia as the source of nitrogen. Regulates intracellular CTP levels through interactions with the four ribonucleotide triphosphates. The protein is CTP synthase of Psychrobacter sp. (strain PRwf-1).